A 350-amino-acid polypeptide reads, in one-letter code: Guanine nucleotide-binding protein G(t) subunit alpha-1 (350 aa).

Residues 1–21 form a disordered region; the sequence is MGAGASAEEKHSRELEKKLKE. A lipid anchor (N-myristoyl glycine) is attached at G2. Positions 7-21 are enriched in basic and acidic residues; that stretch reads AEEKHSRELEKKLKE. A G-alpha domain is found at 28 to 350; sequence RTVKLLLLGA…KENLKDCGLF (323 aa). The segment at 31–44 is G1 motif; that stretch reads KLLLLGAGESGKST. 36 to 43 contributes to the GTP binding site; sequence GAGESGKS. Mg(2+) is bound at residue S43. At Y142 the chain carries Phosphotyrosine. GTP-binding positions include D146, 171-177, G199, 265-268, and A322; these read LRSRVKT and NKKD. The interval 169-177 is G2 motif; sequence DVLRSRVKT. T177 provides a ligand contact to Mg(2+). Residues 192–201 are G3 motif; that stretch reads FRMFDVGGQR. A G4 motif region spans residues 261–268; sequence VLFLNKKD. The G5 motif stretch occupies residues 320-325; sequence TCATDT. The interval 340-350 is interaction with RHO; it reads IKENLKDCGLF.

It belongs to the G-alpha family. G(i/o/t/z) subfamily. Heterotrimeric G proteins are composed of 3 subunits alpha, beta and gamma. The alpha chain contains the guanine nucleotide binding site. Interacts with RHO. Interacts with RGS9 and PDE6G. Interacts (when myristoylated) with UNC119; interaction is required for localization in sensory neurons. In terms of tissue distribution, in the retina, expressed in the rod photoreceptors.

Its subcellular location is the cell projection. The protein resides in the cilium. The protein localises to the photoreceptor outer segment. It is found in the membrane. It localises to the photoreceptor inner segment. Functions as a signal transducer for the rod photoreceptor RHO. Required for normal RHO-mediated light perception by the retina. Guanine nucleotide-binding proteins (G proteins) function as transducers downstream of G protein-coupled receptors (GPCRs), such as the photoreceptor RHO. The alpha chain contains the guanine nucleotide binding site and alternates between an active, GTP-bound state and an inactive, GDP-bound state. Activated RHO promotes GDP release and GTP binding. Signaling is mediated via downstream effector proteins, such as cGMP-phosphodiesterase. The polypeptide is Guanine nucleotide-binding protein G(t) subunit alpha-1 (Gnat1) (Mus musculus (Mouse)).